A 189-amino-acid polypeptide reads, in one-letter code: HGPRTase-like protein (189 aa).

Belongs to the purine/pyrimidine phosphoribosyltransferase family. Archaeal HPRT subfamily.

In terms of biological role, may catalyze a purine salvage reaction, the substrate is unknown. In Halorhabdus utahensis (strain DSM 12940 / JCM 11049 / AX-2), this protein is HGPRTase-like protein.